The following is a 224-amino-acid chain: Pre-hexon-linking protein VIII (224 aa).

The residue at position 64 (threonine 64) is a Phosphothreonine; by host. A propeptide spanning residues 112 to 154 is cleaved from the precursor; sequence RQLCPSQIGIKSPVLAGTGIQLSEDIPSASWIRPDGIFQLGGG.

It belongs to the adenoviridae hexon-linking protein family. Interacts with the peripentonal hexons as well as the hexons in the facets. Part of a complex composed of the core-capsid bridging protein, the endosome lysis protein VI and the hexon-linking protein VIII; these interactions bridge the virus core to the capsid. Cleaved by the viral protease during virion maturation. May cause the middle segment to be shed from the capsid.

It localises to the virion. The protein localises to the host nucleus. Structural component of the virion that acts as a cement protein on the capsid interior and which glue the peripentonal hexons and group-of-nine hexons together. The polypeptide is Pre-hexon-linking protein VIII (Canis lupus familiaris (Dog)).